The sequence spans 328 residues: Ubiquitin-conjugating enzyme E2 Z (328 aa).

A UBC core domain is found at Gln-71–Val-225. Catalysis depends on Cys-160, which acts as the Glycyl thioester intermediate. The tract at residues Arg-295–Pro-328 is disordered. Over residues Asp-312 to Pro-328 the composition is skewed to low complexity.

It belongs to the ubiquitin-conjugating enzyme family.

Its subcellular location is the cytoplasm. It is found in the nucleus. The enzyme catalyses S-ubiquitinyl-[E1 ubiquitin-activating enzyme]-L-cysteine + [E2 ubiquitin-conjugating enzyme]-L-cysteine = [E1 ubiquitin-activating enzyme]-L-cysteine + S-ubiquitinyl-[E2 ubiquitin-conjugating enzyme]-L-cysteine.. Its pathway is protein modification; protein ubiquitination. Its function is as follows. Catalyzes the covalent attachment of ubiquitin to other proteins. May be involved in apoptosis regulation. The sequence is that of Ubiquitin-conjugating enzyme E2 Z (ube2z) from Danio rerio (Zebrafish).